We begin with the raw amino-acid sequence, 244 residues long: Flavin-dependent thymidylate synthase (244 aa).

The region spanning 2–207 (VRVTLVNYTK…DIRPIIKWAK (206 aa)) is the ThyX domain. FAD contacts are provided by residues Ser-56, 80 to 82 (RHR), and Gln-88. DUMP is bound by residues 77-80 (QLVR), 88-92 (QQSQR), and Arg-146. The short motif at 80-90 (RHRIASYTQQS) is the ThyX motif element. FAD is bound by residues 162–164 (NLR) and His-168. Arg-173 lines the dUMP pocket. The active-site Involved in ionization of N3 of dUMP, leading to its activation is Arg-173.

This sequence belongs to the thymidylate synthase ThyX family. Homotetramer. FAD is required as a cofactor.

It catalyses the reaction dUMP + (6R)-5,10-methylene-5,6,7,8-tetrahydrofolate + NADPH + H(+) = dTMP + (6S)-5,6,7,8-tetrahydrofolate + NADP(+). It participates in pyrimidine metabolism; dTTP biosynthesis. Functionally, catalyzes the reductive methylation of 2'-deoxyuridine-5'-monophosphate (dUMP) to 2'-deoxythymidine-5'-monophosphate (dTMP) while utilizing 5,10-methylenetetrahydrofolate (mTHF) as the methyl donor, and NADPH and FADH(2) as the reductant. The sequence is that of Flavin-dependent thymidylate synthase from Pyrococcus furiosus (strain ATCC 43587 / DSM 3638 / JCM 8422 / Vc1).